The chain runs to 415 residues: Gamma-glutamyl phosphate reductase (415 aa).

Belongs to the gamma-glutamyl phosphate reductase family.

It localises to the cytoplasm. It carries out the reaction L-glutamate 5-semialdehyde + phosphate + NADP(+) = L-glutamyl 5-phosphate + NADPH + H(+). It functions in the pathway amino-acid biosynthesis; L-proline biosynthesis; L-glutamate 5-semialdehyde from L-glutamate: step 2/2. Catalyzes the NADPH-dependent reduction of L-glutamate 5-phosphate into L-glutamate 5-semialdehyde and phosphate. The product spontaneously undergoes cyclization to form 1-pyrroline-5-carboxylate. The polypeptide is Gamma-glutamyl phosphate reductase (Listeria welshimeri serovar 6b (strain ATCC 35897 / DSM 20650 / CCUG 15529 / CIP 8149 / NCTC 11857 / SLCC 5334 / V8)).